Here is a 182-residue protein sequence, read N- to C-terminus: Sec-independent protein translocase protein TatB (182 aa).

A helical membrane pass occupies residues 1 to 21; the sequence is MFDIGFSELLLVFVIGLIVLG. Disordered stretches follow at residues 87–107 and 121–182; these read QAAESMKRTYSANDPEQASDE and TQHE…SDKP. Low complexity predominate over residues 168 to 182; it reads AAPVVESSPSSSDKP.

This sequence belongs to the TatB family. In terms of assembly, the Tat system comprises two distinct complexes: a TatABC complex, containing multiple copies of TatA, TatB and TatC subunits, and a separate TatA complex, containing only TatA subunits. Substrates initially bind to the TatABC complex, which probably triggers association of the separate TatA complex to form the active translocon.

It localises to the cell inner membrane. In terms of biological role, part of the twin-arginine translocation (Tat) system that transports large folded proteins containing a characteristic twin-arginine motif in their signal peptide across membranes. Together with TatC, TatB is part of a receptor directly interacting with Tat signal peptides. TatB may form an oligomeric binding site that transiently accommodates folded Tat precursor proteins before their translocation. The chain is Sec-independent protein translocase protein TatB from Salmonella choleraesuis (strain SC-B67).